The following is a 348-amino-acid chain: Erythronate-4-phosphate dehydrogenase (348 aa).

Residues Thr-46 and Thr-67 each coordinate substrate. Residue Asp-147 coordinates NAD(+). Residue Arg-209 is part of the active site. Asp-233 serves as a coordination point for NAD(+). Residue Glu-238 is part of the active site. The Proton donor role is filled by His-255. NAD(+) is bound at residue Gly-258. A substrate-binding site is contributed by Tyr-259.

This sequence belongs to the D-isomer specific 2-hydroxyacid dehydrogenase family. PdxB subfamily. As to quaternary structure, homodimer.

The protein localises to the cytoplasm. It carries out the reaction 4-phospho-D-erythronate + NAD(+) = (R)-3-hydroxy-2-oxo-4-phosphooxybutanoate + NADH + H(+). The protein operates within cofactor biosynthesis; pyridoxine 5'-phosphate biosynthesis; pyridoxine 5'-phosphate from D-erythrose 4-phosphate: step 2/5. Functionally, catalyzes the oxidation of erythronate-4-phosphate to 3-hydroxy-2-oxo-4-phosphonooxybutanoate. This Bacteroides thetaiotaomicron (strain ATCC 29148 / DSM 2079 / JCM 5827 / CCUG 10774 / NCTC 10582 / VPI-5482 / E50) protein is Erythronate-4-phosphate dehydrogenase.